We begin with the raw amino-acid sequence, 556 residues long: MSKPETTAAPNFLRQIVQADLDAGKHAKIVTRFPPEPNGYLHIGHAKSICLNFGLAQEFAGDCHLRFDDTNPAKEDQEYIDAIEADIKWLGFQWSGEVCYASNYFDQLHAWAIELIKAGKAFVCDLGPEEMREYRGTLTEPGRNSPYRDRSVEENLDLFARMKAGEFPDGARSLRAKIDMGSPNMNLRDPILYRIRHAHHHQTGDKWCIYPSYDFTHGQSDAIEGITHSICTLEFEDHRPLYEWFLANLPVPAQPRQYEFSRLNLNYTVTSKRKLKQLVDEGHVSGWDDPRMSTLSGYRRRGYTPESIRNFCEMIGVNRASGVVDIGMLEFSIRDHLDATAPRAMCVLKPLKVVITNYPEGQVENLELPRHPKEDMGVRVLPFGRELFIDAGDFEEVPPAGYKRLIPGGEVRLRGSYVIRADEAIKDADGNIVELRCSYDPDTLGKNPEGRKVKGVIHWVPAEGSVECEVRLYDRLFRSANPEKAEEGGSFLDNINADSLQVLTGCRAEPSLGQANPEDRFQFEREGYFVADLKDSRPGKPVFNRTVTLRDSWGQG.

Residues 35–45 (PEPNGYLHIGH) carry the 'HIGH' region motif. ATP contacts are provided by residues 36–38 (EPN) and 42–48 (HIGHAKS). The L-glutamine site is built by D68 and Y213. Residues T232 and 262-263 (RL) each bind ATP. The 'KMSKS' region signature appears at 269 to 273 (VTSKR).

The protein belongs to the class-I aminoacyl-tRNA synthetase family. Monomer.

It localises to the cytoplasm. The enzyme catalyses tRNA(Gln) + L-glutamine + ATP = L-glutaminyl-tRNA(Gln) + AMP + diphosphate. In Pseudomonas aeruginosa (strain LESB58), this protein is Glutamine--tRNA ligase.